Reading from the N-terminus, the 130-residue chain is Small ribosomal subunit protein uS11 (130 aa).

It belongs to the universal ribosomal protein uS11 family. In terms of assembly, part of the 30S ribosomal subunit. Interacts with proteins S7 and S18. Binds to IF-3.

In terms of biological role, located on the platform of the 30S subunit, it bridges several disparate RNA helices of the 16S rRNA. Forms part of the Shine-Dalgarno cleft in the 70S ribosome. In Prochlorococcus marinus (strain MIT 9301), this protein is Small ribosomal subunit protein uS11.